We begin with the raw amino-acid sequence, 241 residues long: Chloride intracellular channel protein 1 (241 aa).

Residue Ala2 is modified to N-acetylalanine. A required for insertion into the membrane region spans residues Ala2–Pro90. An N6-acetyllysine modification is found at Lys13. Residues Cys24–Ser27 carry the G-site motif. Cys24 and Cys59 form a disulfide bridge. A helical transmembrane segment spans residues Phe26–Val46. The region spanning Tyr93–Tyr233 is the GST C-terminal domain. Residue Lys119 is modified to N6-acetyllysine. A Phosphoserine modification is found at Ser121. The residue at position 131 (Lys131) is an N6-acetyllysine. Position 156 is a phosphoserine (Ser156). Tyr233 is modified (phosphotyrosine).

It belongs to the chloride channel CLIC family. As to quaternary structure, monomer. Homodimer (in vitro). Interacts with TRAPPC2. Dimerization requires a conformation change that leads to the exposure of a large hydrophobic surface. In vivo, this may lead to membrane insertion.

The protein resides in the nucleus. The protein localises to the nucleus membrane. Its subcellular location is the cytoplasm. It localises to the cell membrane. It is found in the endoplasmic reticulum. It carries out the reaction L-dehydroascorbate + 2 glutathione = glutathione disulfide + L-ascorbate. The enzyme catalyses chloride(in) = chloride(out). The catalysed reaction is iodide(out) = iodide(in). It catalyses the reaction thiocyanate(in) = thiocyanate(out). It carries out the reaction nitrate(in) = nitrate(out). The enzyme catalyses bromide(in) = bromide(out). The catalysed reaction is fluoride(in) = fluoride(out). Its function is as follows. In the soluble state, catalyzes glutaredoxin-like thiol disulfide exchange reactions with reduced glutathione as electron donor. Reduces selenite and dehydroascorbate and may act as an antioxidant during oxidative stress response. Can insert into membranes and form voltage-dependent multi-ion conductive channels. Membrane insertion seems to be redox-regulated and may occur only under oxidizing conditions. Involved in regulation of the cell cycle. This Bos taurus (Bovine) protein is Chloride intracellular channel protein 1 (CLIC1).